The chain runs to 557 residues: Formate--tetrahydrofolate ligase (557 aa).

67 to 74 is an ATP binding site; the sequence is TPAGEGKS.

The protein belongs to the formate--tetrahydrofolate ligase family.

It carries out the reaction (6S)-5,6,7,8-tetrahydrofolate + formate + ATP = (6R)-10-formyltetrahydrofolate + ADP + phosphate. It participates in one-carbon metabolism; tetrahydrofolate interconversion. In Lacticaseibacillus paracasei (strain ATCC 334 / BCRC 17002 / CCUG 31169 / CIP 107868 / KCTC 3260 / NRRL B-441) (Lactobacillus paracasei), this protein is Formate--tetrahydrofolate ligase.